We begin with the raw amino-acid sequence, 205 residues long: Regulator of G-protein signaling 4 (205 aa).

Residues C2, C12, and C95 are each lipidated (S-palmitoyl cysteine). The RGS domain maps to 62 to 178 (SLENLISHEC…LKSRFYLDLV (117 aa)).

Post-translationally, palmitoylated on Cys-2 and/or Cys-12. In terms of processing, phosphorylated by cyclic GMP-dependent protein kinase.

In terms of biological role, inhibits signal transduction by increasing the GTPase activity of G protein alpha subunits thereby driving them into their inactive GDP-bound form. Activity on G(z)-alpha is inhibited by phosphorylation of the G-protein. Activity on G(z)-alpha and G(i)-alpha-1 is inhibited by palmitoylation of the G-protein. In Pongo abelii (Sumatran orangutan), this protein is Regulator of G-protein signaling 4 (RGS4).